The following is a 328-amino-acid chain: Nucleotide-binding protein Blon_1085/BLIJ_1109 (328 aa).

Positions 1 to 33 (MSQQTTIRDTGEAAATNAPANSATSTSTPDNQP) are disordered. Residues 13–29 (AAATNAPANSATSTSTP) are compositionally biased toward low complexity. Residue 46–53 (GMSGAGRS) coordinates ATP. 101–104 (DVRS) contacts GTP.

It belongs to the RapZ-like family.

Its function is as follows. Displays ATPase and GTPase activities. The chain is Nucleotide-binding protein Blon_1085/BLIJ_1109 from Bifidobacterium longum subsp. infantis (strain ATCC 15697 / DSM 20088 / JCM 1222 / NCTC 11817 / S12).